The chain runs to 1653 residues: Protein strawberry notch (1653 aa).

Disordered regions lie at residues 1–46 (MTSK…GRDL), 190–211 (GSPA…GGAI), 237–265 (GSNA…PNPG), 317–345 (NNQK…VKGN), and 883–1043 (SVAD…PSGS). Positions 11 to 36 (DADDDNDNFDEDDSGSDFDDDEDPDQ) are enriched in acidic residues. Phosphoserine occurs at positions 24 and 26. Residues 194–205 (ARSSGNAGTTGS) are compositionally biased toward polar residues. Residues 256–265 (SPTGGIPNPG) show a composition bias toward low complexity. A compositionally biased stretch (gly residues) spans 329–342 (GSGGPAGGAPGSGV). Low complexity predominate over residues 883 to 901 (SVADSTSSLSNNSNITTAA). A phosphoserine mark is found at Ser929 and Ser931. Positions 966-975 (IDDEDEDHDV) are enriched in acidic residues. The span at 980–998 (RSVASDASSDFNPFFSGSD) shows a compositional bias: polar residues. The span at 1008–1027 (RSKKSKKAQKKSKKKVKKEK) shows a compositional bias: basic residues. The stretch at 1064 to 1125 (LSTQDKIQDL…RKIERLGARL (62 aa)) forms a coiled coil.

The protein belongs to the SBNO family. In terms of assembly, interacts with vg for function in the wing disk. Interacts with Su(H) for function in the eye disk. At stage 8, when the formation of the midline precursor cells depends on Notch signaling, high level of expression is seen in the midline precursor cells and a lower level in the surrounding epidermal cells. Between stages 11 and 14, expression is uniform throughout the epidermis, and at stage 16, high level of expression is restricted to the central nervous system. Expressed in the larval leg, wing and eye imaginal disks. Expression is over the wing disk and accumulates within the pleural region.

The protein localises to the nucleus. Its function is as follows. Notch pathway component, may contribute to the specificity between lateral and inductive Notch signaling pathways in the wing disk. Required during many developmental stages including oogenesis, embryogenesis and imaginal development of the eye, wing and leg. Ebi and sno regulate EGFR-dependent Delta transcription in the developing eye, by antagonizing a repressor function of Suppressor of Hairless (Su(H)). They are required in the R-cells for normal cone cell development. This Drosophila melanogaster (Fruit fly) protein is Protein strawberry notch.